A 918-amino-acid polypeptide reads, in one-letter code: MIEKAIVAKPKGLLKGVQSSSDSKGSPVKKSLEGKEAITYAKILRSRNKFVDALAIYELEKDSKNVEAHIGKGICLQTQNKGNLAFDCFSEAIRLDPHNACALTHCGILYKDEGRLVEAASYQKALQADPSYKPAAECLATVLNDLGTSLKGNTQEGIQKYYEAVKIDPHYAPACYNLGVVYSEMMQYDVALSCYERAATESPTYADAYCNTGIIYKNRGDLCLAVSPNFEIAKNNMGIALTDLGTKEKLEGDIDQGVAYYKKALYYNWHYSDAMYNLGVAYGEMLKFDMAIIFDELAFHFNPHCAEACNNLGVIYKDRDNLDKAVECYQKALSIKPNFSQSLNNLGVVFTVQGKMDAAASMIEKAIVANPTYAEAYNNLGVLYRDAGNIFLAIEAYEQCLKIDPDSRNAGQNRLLAMNYINEGADDRLYEAHRDWGGRFMRLYSQYTSWDNPKDPERPLVIGYGSPDHFLSYFIEAPLLYHDYENFKVVTYSAVVKADAKTNRFRERVLKKGGIWRDIYGIDEKKVASMIREDKVDILIELTGHTANNKLGMMACRPAPIQVTWIGYPNTTGLPTIDYRITDSLADPLDTKQKHVEELIQLPACFLCYTPSPEAGPVSPTPALSNGFITFGSFNNLAKITPKVLQVWARILCAVSNSRLIVKCKPFCCESVRQTFLSTLEQLGLESTRVDLLPLILLNHDHMQAYSLMDISLDTFPYAGTTTTCESLYMGVPCITMRGLVHAHNVGVSLLSTVGLGHLVAKNEDDYVRLAVQLASDVTALSNLRLTLRELMSKSPLCDGPKFIQDLELTYRSMWHRYCKGDIPSLSRMEILQKEELDVVQEQLHQQPNTSPQKLVKDEPADDASGPEHGPASKDNPLVLIKINGYNTSPSSITSPSSEENGVSQTRMLNCGDQCFRV.

TPR repeat units follow at residues 34–66, 67–99, 101–132, 140–171, 172–205, 207–238, 239–271, 273–305, 306–339, 341–373, and 374–407; these read GKEA…SKNV, EAHI…DPHN, CALT…DPSY, ATVL…DPHY, APAC…SPTY, DAYC…NNMG, IALT…NWHY, DAMY…NPHC, AEAC…KPNF, QSLN…NPTY, and AEAY…DPDS. Residues 408–918 are catalytic region; that stretch reads RNAGQNRLLA…LNCGDQCFRV (511 aa). Over residues 843-853 the composition is skewed to polar residues; that stretch reads QLHQQPNTSPQ. The interval 843–877 is disordered; it reads QLHQQPNTSPQKLVKDEPADDASGPEHGPASKDNP.

It belongs to the glycosyltransferase 41 family. O-GlcNAc transferase subfamily.

Its subcellular location is the nucleus. The catalysed reaction is L-seryl-[protein] + UDP-N-acetyl-alpha-D-glucosamine = 3-O-(N-acetyl-beta-D-glucosaminyl)-L-seryl-[protein] + UDP + H(+). It catalyses the reaction L-threonyl-[protein] + UDP-N-acetyl-alpha-D-glucosamine = 3-O-(N-acetyl-beta-D-glucosaminyl)-L-threonyl-[protein] + UDP + H(+). The protein operates within protein modification; protein glycosylation. Probable O-linked N-acetylglucosamine transferase (OGT) involved in various processes such as gibberellin (GA) signaling pathway. OGTs catalyze the addition of nucleotide-activated sugars directly onto the polypeptide through O-glycosidic linkage with the hydroxyl of serine or threonine. Probably acts by adding O-linked sugars to yet unknown proteins. May function as a negative regulator of GA signal transduction during vernalization, inhibiting adventitious shoot elongation during vernalization. This chain is Probable UDP-N-acetylglucosamine--peptide N-acetylglucosaminyltransferase SPINDLY (SPY), found in Eustoma exaltatum subsp. russellianum (Bluebells).